We begin with the raw amino-acid sequence, 201 residues long: Recombination protein RecR (201 aa).

The segment at C60 to C75 adopts a C4-type zinc-finger fold. Positions A83–P178 constitute a Toprim domain.

It belongs to the RecR family.

May play a role in DNA repair. It seems to be involved in an RecBC-independent recombinational process of DNA repair. It may act with RecF and RecO. The sequence is that of Recombination protein RecR from Rhodopseudomonas palustris (strain BisA53).